The primary structure comprises 557 residues: Urocanate hydratase (557 aa).

The interval 1–20 is disordered; sequence MSNPRHNEREVRSPRGDELN. NAD(+) is bound by residues 52–53, Gln130, 176–178, Glu196, Arg201, 242–243, 263–267, 273–274, and Tyr322; these read GG, GMG, NA, QTSAH, and YL. Residue Cys410 is part of the active site. Residue Gly492 participates in NAD(+) binding.

This sequence belongs to the urocanase family. The cofactor is NAD(+).

Its subcellular location is the cytoplasm. The enzyme catalyses 4-imidazolone-5-propanoate = trans-urocanate + H2O. Its pathway is amino-acid degradation; L-histidine degradation into L-glutamate; N-formimidoyl-L-glutamate from L-histidine: step 2/3. In terms of biological role, catalyzes the conversion of urocanate to 4-imidazolone-5-propionate. This is Urocanate hydratase from Brucella melitensis biotype 1 (strain ATCC 23456 / CCUG 17765 / NCTC 10094 / 16M).